Consider the following 551-residue polypeptide: Endolytic murein transglycosylase (551 aa).

At 1 to 187 (MSEKSREEEK…PKKEKKSHVK (187 aa)) the chain is on the cytoplasmic side. The interval 38 to 180 (VRTPANEPSA…EGAKPAKPKK (143 aa)) is disordered. 2 stretches are compositionally biased toward low complexity: residues 100–110 (PSSPAEESGSR) and 145–157 (QAGPETPTPATET). Basic and acidic residues predominate over residues 159–174 (DIIRDTSRRSRREGAK). The helical transmembrane segment at 188–208 (AFVISFLVFLALLSAGGYFGY) threads the bilayer. Over 209–551 (QYVLDSLLPI…VAEHVNSKLN (343 aa)) the chain is Extracellular.

Belongs to the transglycosylase MltG family. Interacts with RodZ. Interacts with MreC in the elongasome; interaction is strongly reduced when the 90 C-terminal residues of MreC are missing. Interacts with KhpB (also called EloR/Jag) via MltG's N-terminus, suggesting the N-terminus of MltG is cytoplasmic.

The protein localises to the cell membrane. The enzyme catalyses a peptidoglycan chain = a peptidoglycan chain with N-acetyl-1,6-anhydromuramyl-[peptide] at the reducing end + a peptidoglycan chain with N-acetylglucosamine at the non-reducing end.. In terms of biological role, functions as a peptidoglycan terminase that cleaves nascent peptidoglycan strands endolytically to terminate their elongation. Its function is as follows. Mutations in this gene suppress deletion of PBP2b (penA); truncation at residue 168, undefined changes between residue Ile-447 and Ala-505, and mutation of Ala-505 suppress the penA deletion. Probably part of the elongasome which synthesizes peripheral peptidoglycan. The protein is Endolytic murein transglycosylase of Streptococcus pneumoniae (strain ATCC BAA-255 / R6).